Consider the following 320-residue polypeptide: Putative protein FRMPD2-like (320 aa).

2 consecutive PDZ domains span residues 1 to 46 (MTSI…ERRV) and 90 to 178 (EVKL…CRPP). The segment at 215 to 239 (DQEDSWRDSASPDAGEGLGLRPESS) is disordered.

This chain is Putative protein FRMPD2-like, found in Homo sapiens (Human).